Here is a 158-residue protein sequence, read N- to C-terminus: 2-C-methyl-D-erythritol 2,4-cyclodiphosphate synthase (158 aa).

Residues D9 and H11 each contribute to the a divalent metal cation site. 4-CDP-2-C-methyl-D-erythritol 2-phosphate-binding positions include 9–11 (DVH) and 35–36 (HS). A divalent metal cation is bound at residue H43. Residues 57-59 (DIG) and R143 each bind 4-CDP-2-C-methyl-D-erythritol 2-phosphate.

The protein belongs to the IspF family. In terms of assembly, homotrimer. The cofactor is a divalent metal cation.

It catalyses the reaction 4-CDP-2-C-methyl-D-erythritol 2-phosphate = 2-C-methyl-D-erythritol 2,4-cyclic diphosphate + CMP. The protein operates within isoprenoid biosynthesis; isopentenyl diphosphate biosynthesis via DXP pathway; isopentenyl diphosphate from 1-deoxy-D-xylulose 5-phosphate: step 4/6. Functionally, involved in the biosynthesis of isopentenyl diphosphate (IPP) and dimethylallyl diphosphate (DMAPP), two major building blocks of isoprenoid compounds. Catalyzes the conversion of 4-diphosphocytidyl-2-C-methyl-D-erythritol 2-phosphate (CDP-ME2P) to 2-C-methyl-D-erythritol 2,4-cyclodiphosphate (ME-CPP) with a corresponding release of cytidine 5-monophosphate (CMP). The chain is 2-C-methyl-D-erythritol 2,4-cyclodiphosphate synthase from Chromobacterium violaceum (strain ATCC 12472 / DSM 30191 / JCM 1249 / CCUG 213 / NBRC 12614 / NCIMB 9131 / NCTC 9757 / MK).